The chain runs to 428 residues: Serine--tRNA ligase (428 aa).

An L-serine-binding site is contributed by 231–233 (TAE). Residues 262-264 (RRE) and Val-278 contribute to the ATP site. Glu-285 serves as a coordination point for L-serine. Position 349 to 352 (349 to 352 (EVSS)) interacts with ATP. An L-serine-binding site is contributed by Ser-384.

The protein belongs to the class-II aminoacyl-tRNA synthetase family. Type-1 seryl-tRNA synthetase subfamily. As to quaternary structure, homodimer. The tRNA molecule binds across the dimer.

The protein localises to the cytoplasm. It carries out the reaction tRNA(Ser) + L-serine + ATP = L-seryl-tRNA(Ser) + AMP + diphosphate + H(+). The enzyme catalyses tRNA(Sec) + L-serine + ATP = L-seryl-tRNA(Sec) + AMP + diphosphate + H(+). Its pathway is aminoacyl-tRNA biosynthesis; selenocysteinyl-tRNA(Sec) biosynthesis; L-seryl-tRNA(Sec) from L-serine and tRNA(Sec): step 1/1. Catalyzes the attachment of serine to tRNA(Ser). Is also able to aminoacylate tRNA(Sec) with serine, to form the misacylated tRNA L-seryl-tRNA(Sec), which will be further converted into selenocysteinyl-tRNA(Sec). The protein is Serine--tRNA ligase of Chlamydia muridarum (strain MoPn / Nigg).